A 351-amino-acid chain; its full sequence is Putative phospho-N-acetylmuramoyl-pentapeptide-transferase (351 aa).

10 consecutive transmembrane segments (helical) span residues 2–22, 44–64, 71–91, 158–178, 181–201, 212–232, 235–255, 258–278, 281–301, and 328–348; these read MEFLMVFIISTVSAAVFTLFI, AGTPTMGGLGMLLALLLVTVL, LVLTSLIVLTAAIVGLLDDLL, GEKILAQLLIGVFLVLSGAVG, GGFYLGLAAAPIAIAGMVGAI, GMAAGIMLIASLSCAIFLGLS, ALPFLALAGMCAGFLVFNRHP, IFMGDTGSFALGAGYATAVML, TVYFGVLAIAVPVVSVIVSLL, and IVLLYWLITLIVCALGLYMTG.

The protein belongs to the glycosyltransferase 4 family. MraY subfamily. The cofactor is Mg(2+).

The protein resides in the cell membrane. It catalyses the reaction UDP-N-acetyl-alpha-D-muramoyl-L-alanyl-gamma-D-glutamyl-meso-2,6-diaminopimeloyl-D-alanyl-D-alanine + di-trans,octa-cis-undecaprenyl phosphate = di-trans,octa-cis-undecaprenyl diphospho-N-acetyl-alpha-D-muramoyl-L-alanyl-D-glutamyl-meso-2,6-diaminopimeloyl-D-alanyl-D-alanine + UMP. This chain is Putative phospho-N-acetylmuramoyl-pentapeptide-transferase, found in Methanothermobacter thermautotrophicus (strain ATCC 29096 / DSM 1053 / JCM 10044 / NBRC 100330 / Delta H) (Methanobacterium thermoautotrophicum).